The sequence spans 146 residues: Leghemoglobin Lb120-1 (146 aa).

Residues 2-146 (GFTEKQEALV…LASAIKKAMN (145 aa)) enclose the Globin domain. Nitrated tyrosine is present on residues Y24 and Y29. S44 contributes to the heme b binding site. Residue S44 is modified to Phosphoserine. An O2-binding site is contributed by H61. Heme b contacts are provided by K64, H93, and K96. Y134 bears the Nitrated tyrosine mark.

This sequence belongs to the plant globin family. Monomer. Nitrated in effective nodules and particularly in hypoxic conditions; this mechanism may play a protective role in the symbiosis by buffering toxic peroxynitrite NO(2)(-). Nitration level decrease during nodule senescence. Post-translationally, phosphorylation at Ser-44 disrupts the molecular environment of its porphyrin ring oxygen binding pocket, thus leading to a reduced oxygen consumption and to the delivery of oxygen O(2) to symbiosomes. In terms of tissue distribution, root nodules.

The protein localises to the cytoplasm. It is found in the cytosol. Its subcellular location is the nucleus. Leghemoglobin that reversibly binds oxygen O(2) through a pentacoordinated heme iron. In root nodules, facilitates the diffusion of oxygen to the bacteroids while preventing the bacterial nitrogenase from being inactivated by buffering dioxygen, nitric oxide and carbon monoxide, and promoting the formation of reactive oxygen species (ROS, e.g. H(2)O(2)). This role is essential for symbiotic nitrogen fixation (SNF). The protein is Leghemoglobin Lb120-1 of Pisum sativum (Garden pea).